We begin with the raw amino-acid sequence, 861 residues long: Homeobox-leucine zipper protein HOX29 (861 aa).

The homeobox DNA-binding region spans 2–65 (DASKYVRYTP…NRRCREKQRK (64 aa)). A coiled-coil region spans residues 57 to 99 (RRCREKQRKESSRLQALNRKLTAMNKLLMEENDRLQKQVSQLV). The region spanning 162 to 390 (RDASPAGLMS…VAHEDTRSVI (229 aa)) is the START domain.

The protein belongs to the HD-ZIP homeobox family. Class III subfamily. Expressed in roots, stems and leaf blades.

Its subcellular location is the nucleus. In terms of biological role, probable transcription factor. The sequence is that of Homeobox-leucine zipper protein HOX29 (HOX29) from Oryza sativa subsp. indica (Rice).